A 242-amino-acid chain; its full sequence is Carbendazim hydrolyzing esterase (242 aa).

The active-site Acyl-ester intermediate is the Ser-77.

This sequence belongs to the AB hydrolase superfamily.

Its subcellular location is the secreted. The catalysed reaction is carbendazim + H2O = 2-aminobenzimidazole + methanol + CO2. The enzyme catalyses carbendazim + H2O = N-(1H-1,3-benzodiazol-2-yl)carbamate + methanol + H(+). It catalyses the reaction N-(1H-1,3-benzodiazol-2-yl)carbamate + H(+) = 2-aminobenzimidazole + CO2. Its function is as follows. Catalyzes the hydrolysis of the fungicide carbendazim (methyl-1H-benzimidazol-2-ylcarbamate or MBC) to 2-aminobenzimidazole (2-AB). Following hydrolysis of the carbamate ester, the carbamate decarboxylates spontaneously. Can hydrolyze model carboxylesters such as methyl salicylate, alpha-naphthyl acetate and p-nitrophenyl acetate. In addition, shows substantial hydrolytic activity in vitro against widespread pollutants with carboxylester, carbamate and amide linkages, such as dimethyl phthalate, propanil and chlorpropham. The chain is Carbendazim hydrolyzing esterase from Nocardioides sp. (strain SG-4G).